A 373-amino-acid polypeptide reads, in one-letter code: Zn(2)-C6 fungal-type transcription factor afumD (373 aa).

The segment at 1–48 is disordered; sequence MLDRSKMTSAIPDSNSSSSPRGHNQSERDSYNRKKRKGPRLAHRKSRT. A compositionally biased stretch (basic residues) spans 33-48; it reads RKKRKGPRLAHRKSRT. Residues 50–77 constitute a DNA-binding region (zn(2)-C6 fungal-type); sequence CQRCRARRVKCDESRPVCRDCHRHGIPC. Residues 86–110 form a disordered region; that stretch reads GAIPPSTGIQSRPLEPSPSDPSNDA.

It localises to the nucleus. In terms of biological role, zn(2)-C6 fungal-type transcription factor; part of the gene cluster that mediates the biosynthesis fumihopaside A, a hopane-type glucoside that enhances the thermotolerance and UV resistance of N.fumigata. The protein is Zn(2)-C6 fungal-type transcription factor afumD of Aspergillus fumigatus (strain CBS 144.89 / FGSC A1163 / CEA10) (Neosartorya fumigata).